Reading from the N-terminus, the 116-residue chain is Large ribosomal subunit protein bL19 (116 aa).

Belongs to the bacterial ribosomal protein bL19 family.

This protein is located at the 30S-50S ribosomal subunit interface and may play a role in the structure and function of the aminoacyl-tRNA binding site. The sequence is that of Large ribosomal subunit protein bL19 from Staphylococcus aureus (strain Mu3 / ATCC 700698).